The sequence spans 186 residues: Folate transporter FolT (186 aa).

Helical transmembrane passes span 16–36 (VTLAMLIALAFAIGKLSIPII), 47–67 (IVNVMIGMIGGPIWAFISLAI), 81–101 (FIIWWTLLEAVQGLFYGLFFY), 116–136 (VTIATAIIMLIGSFIFTPLLV), and 153–173 (WLKIFEIPIRILVTMAIMPQL).

Forms a stable energy-coupling factor (ECF) transporter complex composed of a membrane-embedded substrate-binding protein (S component), two ATP-binding proteins (A components) and a transmembrane protein (T component).

The protein localises to the cell membrane. Functionally, folate-binding protein that interacts with the energy-coupling factor (ECF) ABC-transporter complex. Unlike classic ABC transporters this ECF transporter provides the energy necessary to transport a number of different substrates. The substrates themselves are bound by transmembrane, not extracytoplasmic soluble proteins. This is Folate transporter FolT (folT) from Streptococcus mutans serotype c (strain ATCC 700610 / UA159).